The chain runs to 138 residues: MPPKKASGTGPKKGQKTRRREKKNVPHGAAHIKSTFNNTIVTITDPQGNVIAWASSGHVGFKGSRKSTPFAAQLAAENAARKAQEHGVRKVDVFVKGPGSGRETAIRSLQAAGLEVGAISDVTPQPHNGVRPPKRRRV.

Disordered regions lie at residues 1 to 29 (MPPK…PHGA) and 117 to 138 (GAIS…RRRV). Residues 13 to 22 (KGQKTRRREK) are compositionally biased toward basic residues.

This sequence belongs to the universal ribosomal protein uS11 family. In terms of assembly, part of the 30S ribosomal subunit. Interacts with proteins S7 and S18. Binds to IF-3.

In terms of biological role, located on the platform of the 30S subunit, it bridges several disparate RNA helices of the 16S rRNA. Forms part of the Shine-Dalgarno cleft in the 70S ribosome. This Mycobacterium ulcerans (strain Agy99) protein is Small ribosomal subunit protein uS11.